The sequence spans 1042 residues: MALVTLQRSPTPSAASSSASNSELEAGSDEERKLNLSLSESFFMVKGAALFLQQGNSPQGQRSLQHPHKHAGDLPQHLQVMINLLRCEDRIKLAVRLESVWTDRVRYMVVVYTSGRQDTEENILLGVDFSSKESKSCTIGMVLRLWSDTKIHLDGDGGFSVSTAGRMHIFKPVSVQAMWSALQVLHKACEVARRHNYFPGGVALIWATYYESCISSEQSCINEWNAMQDLESTRPDSPALFVDKPTEGERTERLIKAKLRSIMMSQDLENVTSKEIRNELEKQMNCNLKEFKEFIDNEMLLILGQMDKPSLIFDHLYLGSEWNASNLEELQGSGVDYILNVTREIDNFFPGLFAYHNIRVYDEETTDLLAHWNEAYHFINKAKRNHSKCLVHCKMGVSRSASTVIAYAMKEFGWPLEKAYNYVKQKRSITRPNAGFMRQLSEYEGILDASKQRHNKLWRQQPTDDTIAEPSEFLPETLDGALDAQLPCLDDTTHPGLPRSLAPGGPALPCCFRRLSDPLLLPHHDETGGLVHLEDLEKDALLEEEESQPVEVHKLVQHPQEGARLCEKDVKRKLEFGNSKPRSDSLPQVEELEKDGSPRTGRWRRASTQLDRSLLDQENLNNNNSKRSCPDDLERDAMFGILSKVKPPYTSCADCMYPTAGGTPEAYMERHEDPSSSAICTQPTFLPHVTSSPMAHASSRSRAPERPASGPANTSPFLLPAGSRKPDVSGSGAGAAPEPPASLLEPSRETSKALPKSLQLKNPHCDKNAANMEVSAKEEPSPKKDPKPAKDLRLLFSNEAEKPTTNSYLMQHQESIIQLQKAGLVRKHTKELERLKSLPSDSPAACRDSATCRLEASIPEEGSQEPAHPALCSQAGSEEQPVGGTLQKSPTSTLPRLDHTSNFSKDFLKTVCYTPTSSSISSNLTRSSSSDSIHSVRGKPGLVKQRAQEIETRLRLAGLTVSSPLKRSHSLAKLGSLNFSTEDLSSEADTSTIADSQDAKCGLSSSFLPEPQSAPRDPAATSKSSGKSAPEHLKSPSRVNKS.

The segment covering 1–12 (MALVTLQRSPTP) has biased composition (polar residues). Residues 1–29 (MALVTLQRSPTPSAASSSASNSELEAGSD) are disordered. Ala-2 is modified (N-acetylalanine). A compositionally biased stretch (low complexity) spans 13-22 (SAASSSASNS). Phosphoserine occurs at positions 37 and 57. The region spanning 249–304 (ERTERLIKAKLRSIMMSQDLENVTSKEIRNELEKQMNCNLKEFKEFIDNEMLLILG) is the DEK-C domain. Residues 308-449 (KPSLIFDHLY…LSEYEGILDA (142 aa)) enclose the Tyrosine-protein phosphatase domain. Catalysis depends on Cys-393, which acts as the Phosphocysteine intermediate. Ser-516 carries the phosphoserine modification. 4 disordered regions span residues 576 to 609 (FGNS…ASTQ), 668 to 766 (MERH…PHCD), 858 to 900 (IPEE…LDHT), and 915 to 942 (PTSS…KPGL). Over residues 675 to 693 (SSSAICTQPTFLPHVTSSP) the composition is skewed to polar residues. A compositionally biased stretch (low complexity) spans 697–712 (ASSRSRAPERPASGPA). Positions 886–900 (LQKSPTSTLPRLDHT) are enriched in polar residues. Ser-889 is subject to Phosphoserine. An interaction with YWHAG region spans residues 889–1042 (SPTSTLPRLD…LKSPSRVNKS (154 aa)). Residues 917 to 935 (SSSISSNLTRSSSSDSIHS) are compositionally biased toward low complexity. The residue at position 970 (Ser-970) is a Phosphoserine. A compositionally biased stretch (polar residues) spans 985–995 (SSEADTSTIAD). The disordered stretch occupies residues 985–1042 (SSEADTSTIADSQDAKCGLSSSFLPEPQSAPRDPAATSKSSGKSAPEHLKSPSRVNKS).

The protein belongs to the protein-tyrosine phosphatase family. As to quaternary structure, interacts with the 14-3-3 proteins YWHAB, YWHAG, YWHAQ, and YWHAZ. Interaction with 14-3-3 proteins inhibits phosphatase activity and also blocks recruitment to lamellipodia and stimulation by actin. Interacts with actin and this stimulates phosphatase activity. Interacts with LIMK1. Post-translationally, phosphorylated. Inhibitory phosphorylation by PAK4 promotes binding to YWHAZ. Phosphorylation at Ser-970 is decreased by stimuli which promote actin reorganization and lamellipodia formation. Can be dephosphorylated and activated by PPP3CA/calcineurin A. Phosphorylation decreases immediately prior to telophase. As to expression, expressed in brain, heart, kidney and thymus. Also expressed at lower levels in liver, skeletal muscle, small intestine and spleen.

The protein localises to the cytoplasm. It is found in the cytoskeleton. It localises to the cleavage furrow. The protein resides in the midbody. It carries out the reaction O-phospho-L-tyrosyl-[protein] + H2O = L-tyrosyl-[protein] + phosphate. It catalyses the reaction O-phospho-L-seryl-[protein] + H2O = L-seryl-[protein] + phosphate. The enzyme catalyses O-phospho-L-threonyl-[protein] + H2O = L-threonyl-[protein] + phosphate. Functionally, protein phosphatase which regulates actin filament dynamics. Dephosphorylates and activates the actin binding/depolymerizing factor cofilin, which subsequently binds to actin filaments and stimulates their disassembly. Inhibitory phosphorylation of cofilin is mediated by LIMK1, which may also be dephosphorylated and inactivated by this protein. In Mus musculus (Mouse), this protein is Protein phosphatase Slingshot homolog 1.